A 184-amino-acid polypeptide reads, in one-letter code: Protein GrpE (184 aa).

The protein belongs to the GrpE family. Homodimer.

The protein localises to the cytoplasm. Functionally, participates actively in the response to hyperosmotic and heat shock by preventing the aggregation of stress-denatured proteins, in association with DnaK and GrpE. It is the nucleotide exchange factor for DnaK and may function as a thermosensor. Unfolded proteins bind initially to DnaJ; upon interaction with the DnaJ-bound protein, DnaK hydrolyzes its bound ATP, resulting in the formation of a stable complex. GrpE releases ADP from DnaK; ATP binding to DnaK triggers the release of the substrate protein, thus completing the reaction cycle. Several rounds of ATP-dependent interactions between DnaJ, DnaK and GrpE are required for fully efficient folding. This chain is Protein GrpE, found in Pseudomonas putida (strain GB-1).